A 265-amino-acid polypeptide reads, in one-letter code: Phosphonoacetaldehyde hydrolase (265 aa).

The active-site Nucleophile is aspartate 9. 2 residues coordinate Mg(2+): aspartate 9 and alanine 11. Residue lysine 50 is the Schiff-base intermediate with substrate of the active site. A Mg(2+)-binding site is contributed by aspartate 184.

The protein belongs to the HAD-like hydrolase superfamily. PhnX family. In terms of assembly, homodimer. Mg(2+) is required as a cofactor.

It carries out the reaction phosphonoacetaldehyde + H2O = acetaldehyde + phosphate + H(+). Its function is as follows. Involved in phosphonate degradation. This is Phosphonoacetaldehyde hydrolase from Lactiplantibacillus plantarum (strain ATCC BAA-793 / NCIMB 8826 / WCFS1) (Lactobacillus plantarum).